The following is a 433-amino-acid chain: Trigger factor (433 aa).

In terms of domain architecture, PPIase FKBP-type spans 161 to 246 (EDRVVIDFVG…LKKVENIVLP (86 aa)).

It belongs to the FKBP-type PPIase family. Tig subfamily.

The protein localises to the cytoplasm. It catalyses the reaction [protein]-peptidylproline (omega=180) = [protein]-peptidylproline (omega=0). Involved in protein export. Acts as a chaperone by maintaining the newly synthesized protein in an open conformation. Functions as a peptidyl-prolyl cis-trans isomerase. The polypeptide is Trigger factor (Actinobacillus pleuropneumoniae serotype 7 (strain AP76)).